A 605-amino-acid polypeptide reads, in one-letter code: Dihydrogeodin oxidase (605 aa).

The N-terminal stretch at 1–18 (MPSLKDWVVAGLVPMTIA) is a signal peptide. Residues Asn-27, Asn-107, and Asn-112 are each glycosylated (N-linked (GlcNAc...) asparagine). Plastocyanin-like domains follow at residues 65–183 (TVTQ…GPSS), 189–347 (DLGP…YDES), and 424–567 (YVDW…KIKP). The Cu cation site is built by His-117, His-119, His-161, and His-163. Residues Asn-278 and Asn-467 are each glycosylated (N-linked (GlcNAc...) asparagine). His-484, His-487, His-489, His-543, Cys-544, His-545, and His-549 together coordinate Cu cation.

Belongs to the multicopper oxidase family. Requires Cu cation as cofactor.

It catalyses the reaction 2 dihydrogeodin + O2 + 2 H(+) = 2 (+)-geodin + 2 H2O. The protein operates within secondary metabolite biosynthesis. Dihydrogeodin oxidase; part of the gene cluster that mediates the biosynthesis of geodin, an intermediate in the biosynthesis of other natural products. The pathway begins with the synthesis of atrochrysone thioester by the polyketide synthase (PKS) gedC. The atrochrysone carboxyl ACP thioesterase gedB then breaks the thioester bond and releases the atrochrysone carboxylic acid from gedC. The atrochrysone carboxylic acid is then converted to atrochrysone which is further transformed into emodinanthrone. The next step is performed by the emodinanthrone oxygenase gedH that catalyzes the oxidation of emodinanthrone to emodin. Emodin O-methyltransferase encoded probably by gedA then catalyzes methylation of the 8-hydroxy group of emodin to form questin. Ring cleavage of questin by questin oxidase gedK leads to desmethylsulochrin via several intermediates including questin epoxide. Another methylation step probably catalyzed by methyltransferase gedG leads to the formation of sulochrin which is further converted to dihydrogeodin by the sulochrin halogenase gedL. Finally, the dihydrogeodin oxidase gedJ catalyzes the stereospecific phenol oxidative coupling reaction converting dihydrogeodin to geodin. The polypeptide is Dihydrogeodin oxidase (Aspergillus terreus (strain NIH 2624 / FGSC A1156)).